The following is a 127-amino-acid chain: Large ribosomal subunit protein bL12 (127 aa).

The protein belongs to the bacterial ribosomal protein bL12 family. As to quaternary structure, homodimer. Part of the ribosomal stalk of the 50S ribosomal subunit. Forms a multimeric L10(L12)X complex, where L10 forms an elongated spine to which 2 to 4 L12 dimers bind in a sequential fashion. Binds GTP-bound translation factors.

Functionally, forms part of the ribosomal stalk which helps the ribosome interact with GTP-bound translation factors. Is thus essential for accurate translation. This chain is Large ribosomal subunit protein bL12, found in Chloroherpeton thalassium (strain ATCC 35110 / GB-78).